We begin with the raw amino-acid sequence, 197 residues long: MAVVPIRIVGDPVLRTETTPIPVGDDGSLPAEVADLIRDLYETMDAANGVGLAANQIGVSQRVFVYDCPDSRGRAGRRRGVVINPVLETSDIPETMPDPDDDEEGCLSVPGEQFPTGRADWARVTGLDADGSPITVEGTGLFARMLQHETGHLDGFLYLDRLIGRHARAAKRAVKHNGWGVPGLSWTPGEDPDPFGH.

Residues C106 and H148 each coordinate Fe cation. E149 is a catalytic residue. Residue H152 coordinates Fe cation.

This sequence belongs to the polypeptide deformylase family. Requires Fe(2+) as cofactor.

The catalysed reaction is N-terminal N-formyl-L-methionyl-[peptide] + H2O = N-terminal L-methionyl-[peptide] + formate. Its function is as follows. Removes the formyl group from the N-terminal Met of newly synthesized proteins. Requires at least a dipeptide for an efficient rate of reaction. N-terminal L-methionine is a prerequisite for activity but the enzyme has broad specificity at other positions. In Mycobacterium sp. (strain JLS), this protein is Peptide deformylase.